The primary structure comprises 484 residues: Poly(A) RNA polymerase GLD2 (484 aa).

Phosphoserine occurs at positions 62 and 69. The Nuclear localization signal motif lies at 76-92; that stretch reads KRISDEKAFRLDGKRQR. Ser95 carries the phosphoserine modification. Mg(2+) is bound by residues Asp213 and Asp215. In terms of domain architecture, PAP-associated spans 386-440; the sequence is SLGDLLLGFLKYYATEFDWNTQMISVREAKAIPRPDDMEWRNKYICVEEPFDGTN.

The protein belongs to the DNA polymerase type-B-like family. GLD2 subfamily. In terms of assembly, interacts with CPEB1, CPEB2, CPSF1 and PABPC1. Interacts with QKI isoform QKI7; promoting recruitment to miRNA miR-122 and miR-122 stabilization. It depends on Mg(2+) as a cofactor. The cofactor is Mn(2+).

The protein localises to the cytoplasm. It is found in the nucleus. It carries out the reaction RNA(n) + ATP = RNA(n)-3'-adenine ribonucleotide + diphosphate. Its function is as follows. Cytoplasmic poly(A) RNA polymerase that adds successive AMP monomers to the 3'-end of specific RNAs, forming a poly(A) tail. In contrast to the canonical nuclear poly(A) RNA polymerase, it only adds poly(A) to selected cytoplasmic mRNAs. Does not play a role in replication-dependent histone mRNA degradation. Adds a single nucleotide to the 3' end of specific miRNAs, monoadenylation stabilizes and prolongs the activity of some but not all miRNAs. This chain is Poly(A) RNA polymerase GLD2, found in Rattus norvegicus (Rat).